We begin with the raw amino-acid sequence, 339 residues long: Ketol-acid reductoisomerase (NADP(+)) (339 aa).

One can recognise a KARI N-terminal Rossmann domain in the interval 1-182; it reads MRVYYDRDAD…GGGRSGIIET (182 aa). NADP(+)-binding positions include 24–27, Lys-48, Ser-51, Thr-53, and 83–86; these read YGSQ and DELQ. His-108 is a catalytic residue. Gly-134 lines the NADP(+) pocket. Residues 183-328 form the KARI C-terminal knotted domain; sequence NFKEECETDL…AKLRGMMPWI (146 aa). Residues Asp-191, Glu-195, Glu-227, and Glu-231 each coordinate Mg(2+). Ser-252 contacts substrate.

It belongs to the ketol-acid reductoisomerase family. Requires Mg(2+) as cofactor.

The catalysed reaction is (2R)-2,3-dihydroxy-3-methylbutanoate + NADP(+) = (2S)-2-acetolactate + NADPH + H(+). It carries out the reaction (2R,3R)-2,3-dihydroxy-3-methylpentanoate + NADP(+) = (S)-2-ethyl-2-hydroxy-3-oxobutanoate + NADPH + H(+). Its pathway is amino-acid biosynthesis; L-isoleucine biosynthesis; L-isoleucine from 2-oxobutanoate: step 2/4. It participates in amino-acid biosynthesis; L-valine biosynthesis; L-valine from pyruvate: step 2/4. Involved in the biosynthesis of branched-chain amino acids (BCAA). Catalyzes an alkyl-migration followed by a ketol-acid reduction of (S)-2-acetolactate (S2AL) to yield (R)-2,3-dihydroxy-isovalerate. In the isomerase reaction, S2AL is rearranged via a Mg-dependent methyl migration to produce 3-hydroxy-3-methyl-2-ketobutyrate (HMKB). In the reductase reaction, this 2-ketoacid undergoes a metal-dependent reduction by NADPH to yield (R)-2,3-dihydroxy-isovalerate. In Agrobacterium fabrum (strain C58 / ATCC 33970) (Agrobacterium tumefaciens (strain C58)), this protein is Ketol-acid reductoisomerase (NADP(+)).